Consider the following 182-residue polypeptide: MPLSLRLAPSPTALSPTTGGFSPAKKQCRIPSYSGVATTTRRIGLCSLDYVKRGDSSVVRCSLQTVNVSVGQVTEVDKDTFWPIVKAAGEKIVVLDMYTQWCGPCKVIAPKYKALSEKYEDVVFLKLDCNPENRPLAKELGIRVVPTFKILKDNQVVKEVTGAKYDDLVAAIETARSASSSG.

Positions 1-22 (MPLSLRLAPSPTALSPTTGGFS) are disordered. Residues 52–177 (KRGDSSVVRC…LVAAIETARS (126 aa)) form the Thioredoxin domain. Catalysis depends on nucleophile residues Cys-102 and Cys-105. Cys-102 and Cys-105 form a disulfide bridge.

Belongs to the thioredoxin family. Plant F-type subfamily. Forms a complex with heterodimeric ferredoxin-thioredoxin reductase (FTR) and ferredoxin.

The protein resides in the plastid. Its subcellular location is the chloroplast. Functionally, participates in various redox reactions through the reversible oxidation of the active center dithiol to a disulfide. The F form is known to activate a number of enzymes of the photosynthetic carbon cycle. The chain is Thioredoxin F-type, chloroplastic (TRXF) from Brassica napus (Rape).